We begin with the raw amino-acid sequence, 555 residues long: Arginine--tRNA ligase (555 aa).

Residues 117 to 127 (ANPNGPLHVGH) carry the 'HIGH' region motif.

This sequence belongs to the class-I aminoacyl-tRNA synthetase family.

It localises to the cytoplasm. The catalysed reaction is tRNA(Arg) + L-arginine + ATP = L-arginyl-tRNA(Arg) + AMP + diphosphate. This is Arginine--tRNA ligase from Methanospirillum hungatei JF-1 (strain ATCC 27890 / DSM 864 / NBRC 100397 / JF-1).